We begin with the raw amino-acid sequence, 256 residues long: Homeobox protein ceh-34 (256 aa).

Positions 134–193 (GEETNYCFKSKSRNVLRDAYKKCQYPSVEDKRRLAQQTELSIIQVSNWFKNKRQRERAAG) form a DNA-binding region, homeobox. The tract at residues 187-233 (QRERAAGQLDRSSARSNDSDDGSSGCESKPPMNIDSPAPPPLPTSFD) is disordered.

Belongs to the SIX/Sine oculis homeobox family. In terms of assembly, interacts (via N-terminus) with eya-1 (via C-terminus). Shows expression only in the pharyngeal nervous system.

The protein resides in the nucleus. In terms of biological role, acts as a transcription regulator. Binds to the sequence motif 5'-TCAGGTT-3'. Binds to the cis-regulatory element of proapoptotic factor egl-1 gene and together with eya-1 activates egl-1 expression to promote motor neuron M4 sister cell apoptosis. Also promotes apoptosis of I1 pharyngeal neuron sister cell. Together with eya-1, required to specify the coelomocyte fate in embryonic and postembryonic precursors. Required to establish and maintain the differentiation of all 14 classes of pharyngeal neurons. Controls the neurotransmitter signaling capacity of the neurons and is required for the expression of some neurotransmitter receptors including mgl-1, glr-2 and ser-7. Affects the neuropeptidergic identity of pharyngeal neurons. Required for the pharyngeal expression of sensory receptors gur-3, glu-7 and str-97, antimicrobial defense genes such as spp-12, gpla-1/flr-2 and htrl-1, and pan-pharyngeal nervous system genes such as kin-36. Required to establish and maintain pharyngeal nervous system architecture by ensuring correct axon and synapse organization. Required for expression of eya-1 which may act as a transcriptional cofactor to specify distinct pharyngeal neuron types. Cooperates with several homeobox proteins to specify distinct pharyngeal neuron types including unc-86 in the NSM and I1 neurons, ceh-14 in the I2 neuron, ceh-2 and pros-1 in the I3 neuron, ceh-45 in the M1 neuron, ceh-2 in the M3 neuron, ceh-28 and zag-1 in the M4 neuron, and vab-15 in the M5 neuron. In Caenorhabditis elegans, this protein is Homeobox protein ceh-34 (ceh-34).